Reading from the N-terminus, the 321-residue chain is Epiphycan (321 aa).

The signal sequence occupies residues 1–19 (MKALARLIVGLLILDAAVT). T60 is a glycosylation site (O-linked (GalNAc...) threonine). A glycan (O-linked (Xyl...) (dermatan sulfate) serine) is linked at S64. Residues 64-100 (SGNRELLTPPPQPEEAEEEEEEESTPRLIDGSSPQEP) form a disordered region. Residues 77–86 (EEAEEEEEEE) are compositionally biased toward acidic residues. The O-linked (GalNAc...) serine glycan is linked to S95. In terms of domain architecture, LRRNT spans 105–142 (VLGPQTNEDFPTCLLCTCISTTVYCDDHELDAIPPLPK). C117 and C129 are joined by a disulfide. LRR repeat units follow at residues 143 to 164 (NTAY…DFAS), 167 to 188 (DLRR…AFRK), 191 to 212 (QLRE…PTTL), 237 to 257 (DLHH…PLPE), and 258 to 279 (NLRA…TFCN). The cysteines at positions 278 and 311 are disulfide-linked. N282 carries N-linked (GlcNAc...) asparagine glycosylation. The stretch at 289-309 (ALEDIRLDGNPINLSKTPQAY) is one LRR 6 repeat.

Belongs to the small leucine-rich proteoglycan (SLRP) family. SLRP class III subfamily. A long and a short form present in approximately equimolar amounts may arise by proteolysis or cleavage by exopeptidases. Post-translationally, the O-linked polysaccharides on Thr-60 and Ser-95 are probably the mucin type linked to GalNAc. There is one glycosaminoglycan chain, known to be dermatan sulfate, and it is probably the O-glycosylation at Ser-64. As to expression, preferentially expressed in the zone of flattened chondrocytes of the developing limb cartilage.

The protein localises to the secreted. It is found in the extracellular space. Its subcellular location is the extracellular matrix. Its function is as follows. May have a role in bone formation and also in establishing the ordered structure of cartilage through matrix organization. The polypeptide is Epiphycan (EPYC) (Bos taurus (Bovine)).